Reading from the N-terminus, the 141-residue chain is Nucleoside diphosphate kinase (141 aa).

Residues K11, F59, R87, T93, R104, and N114 each coordinate ATP. The active-site Pros-phosphohistidine intermediate is the H117.

It belongs to the NDK family. As to quaternary structure, homotetramer. Mg(2+) serves as cofactor.

The protein resides in the cytoplasm. It catalyses the reaction a 2'-deoxyribonucleoside 5'-diphosphate + ATP = a 2'-deoxyribonucleoside 5'-triphosphate + ADP. It carries out the reaction a ribonucleoside 5'-diphosphate + ATP = a ribonucleoside 5'-triphosphate + ADP. Its function is as follows. Major role in the synthesis of nucleoside triphosphates other than ATP. The ATP gamma phosphate is transferred to the NDP beta phosphate via a ping-pong mechanism, using a phosphorylated active-site intermediate. In Chromobacterium violaceum (strain ATCC 12472 / DSM 30191 / JCM 1249 / CCUG 213 / NBRC 12614 / NCIMB 9131 / NCTC 9757 / MK), this protein is Nucleoside diphosphate kinase.